Reading from the N-terminus, the 29-residue chain is Bacteriocin (29 aa).

It is found in the secreted. Functionally, has antibacterial activity against strains of L.monocytogenes, L.lactis, B.subtilis, S.typhi, S.aureus, C.perfringens, E.aerogenes and M.luteus but not against E.coli, S.sonnei, S.pneumoniae, S.faecalis, P.aeruginosa, K.pneumoniae or P.vulgaris. This Lactococcus lactis subsp. lactis (Streptococcus lactis) protein is Bacteriocin.